We begin with the raw amino-acid sequence, 387 residues long: Protein spaetzle 5 (387 aa).

Residues 1–29 form the signal peptide; the sequence is MTKSIKRPPPFSCKQVLLTYVILAYTVAA. A propeptide spanning residues 30-284 is cleaved from the precursor; sequence HSSPPPCGLY…PLKKRSRTKR (255 aa). Positions 133-197 are disordered; it reads QTPFGGNPQR…SGGHLYINQS (65 aa). N-linked (GlcNAc...) asparagine glycosylation is found at N195 and N204. 2 disordered regions span residues 219 to 256 and 269 to 291; these read KQRQ…QSKR and GVEA…GRST. Positions 237-247 are enriched in acidic residues; the sequence is QTEEAEEQDNP. Over residues 276–286 the composition is skewed to basic residues; the sequence is LKKRSRTKRQS. The Spaetzle domain maps to 291-384; that stretch reads TLCQTTSQFI…WFPSCCVCTI (94 aa). Intrachain disulfides connect C293–C350, C331–C380, and C340–C382.

In terms of assembly, homodimer; disulfide-linked. Detected in the fan-shaped body which is a component of the locomotion center in the central nervous system (CNS) (at protein level).

In terms of biological role, neurotrophin which may function as a ligand for the Toll-related receptors Toll-6 and Toll-7. Binds to Toll-7 and Toll-6, and probably acts as their ligands in the promotion of motor axon targeting and neuronal survival in the central nervous system (CNS). Involved in synaptic targeting of ISNb/d motorneurons and also some SNa motorneurons. May be involved in the normal development of specific neurons at the neuromuscular junction. The protein is Protein spaetzle 5 of Drosophila melanogaster (Fruit fly).